Reading from the N-terminus, the 180-residue chain is Large ribosomal subunit protein uL6 (180 aa).

This sequence belongs to the universal ribosomal protein uL6 family. In terms of assembly, part of the 50S ribosomal subunit.

This protein binds to the 23S rRNA, and is important in its secondary structure. It is located near the subunit interface in the base of the L7/L12 stalk, and near the tRNA binding site of the peptidyltransferase center. The sequence is that of Large ribosomal subunit protein uL6 from Dictyoglomus turgidum (strain DSM 6724 / Z-1310).